The primary structure comprises 477 residues: S-triazine hydrolase (477 aa).

Composition is skewed to low complexity over residues 38-73 (SPTT…KSSS) and 120-132 (PLSS…DPTT). Disordered regions lie at residues 38-77 (SPTT…GVVH) and 120-143 (PLSS…GSPF).

Belongs to the metallo-dependent hydrolases superfamily. ATZ/TRZ family.

The protein operates within xenobiotic degradation; melamine degradation. Its function is as follows. Hydrolytic deamination of the S-triazine substrate melamine. The polypeptide is S-triazine hydrolase (trzA) (Gordonia rubripertincta (Rhodococcus corallinus)).